A 766-amino-acid chain; its full sequence is MWRLRTGSSTVDKADSWLSSLNNHLGRQIWCYDPEAGTPQEREAVEAECARFTANRHQQRQSADTLLRLQFQKEHSANRLPSRITVNEDHEVTEDDVTTTLCRALQFYSQLQTDDGHWSGDHSGPMFFLPGMVIALYVTGALDSVLSEHHQREICRYIYNHQRQDGSWGLHPEGTGTLFGTVLSYVTLRLMGESKSNSNNREALRKAQTWIIDHGGATDVPSWGKFWLAVLGVYEWSGVNPLPPESWLLPKSLIAHPGRLPVLYRFIFLPMSYIYARRLSHHLTKIIEDLRKELYTIPYEDIDWNHARKLGAKEEIVPRSVVQDVILSILHNYVEPIMSHWPGFLLRQKALALIMEHIHHEDETTQYLCVCPVSKALNMLCCWLEDRNSDAFKKHLSRVLDFLWLSEDGMKMQVCNGSQLWDTALSVRALISANLLNECSSMLRRAKLYIENTQIQESYPGDLDHWHRITSKGGWPQSTRDWGWPVSDCTAEALQAVLALSSQSTTDVGEALPEERIHECINVLLSFQKSNGSFAPFDARNPLEGPKIWNHTESPGYKSLDFECVECTSSVIQALAAFNKIYPEHRAKEISISIQEGTRFIERLQNSDGSWSGTWGICFTYATWFGIMGLLASGARYYESIAIQRACEFILSKQLPNGGWGEHFHSFKNKVYTNLEGERAHVVHTSWSMLALLATGQEGRDAIPLHRAAKILINAQMETGDYSQEGVVGAVCGDHTISYATYRCVFPIWALGEYRYKLFGKKNMYI.

PFTB repeat units lie at residues 101–143 (LCRA…GALD), 151–192 (QREI…RLMG), 456–507 (QESY…STTD), 517–558 (IHEC…PGYK), 594–634 (IQEG…LASG), 643–684 (IQRA…HVVH), and 705–752 (LHRA…WALG). Aspartate 488 acts as the Proton donor in catalysis.

The protein belongs to the terpene cyclase/mutase family.

It carries out the reaction pre-alpha-onocerin = alpha-onocerin. The protein operates within secondary metabolite biosynthesis; terpenoid biosynthesis. In terms of biological role, oxidosqualene cyclase involved in the biosynthesis of alpha-onocerin, a triterpenoid characterized by a symmetrical structure due to cyclizations at both termini of dioxidosqualene that inhibits acetylcholinesterase. Catalyzes the second half of the cyclization, exclusively from pre-alpha-onocerin. This Lycopodium clavatum (Stag's-horn clubmoss) protein is Alpha-onocerin synthase LCD.